A 917-amino-acid chain; its full sequence is GTPase-activating Rap/Ran-GAP domain-like protein 3 (917 aa).

Residues 185–401 (LLVLEEQEGS…RTLDMLIRSL (217 aa)) enclose the Rap-GAP domain. The CNH domain maps to 483–792 (PHEVVCADSW…QLVASRSDIY (310 aa)).

The protein belongs to the GARNL3 family.

The chain is GTPase-activating Rap/Ran-GAP domain-like protein 3 (GARNL3) from Gallus gallus (Chicken).